The primary structure comprises 204 residues: Large ribosomal subunit protein eL15 (204 aa).

This sequence belongs to the eukaryotic ribosomal protein eL15 family. In terms of assembly, component of the large ribosomal subunit.

Its subcellular location is the cytoplasm. Component of the large ribosomal subunit. The ribosome is a large ribonucleoprotein complex responsible for the synthesis of proteins in the cell. The chain is Large ribosomal subunit protein eL15 (rpl15) from Silurus meridionalis (Southern catfish).